A 48-amino-acid chain; its full sequence is uncharacterized protein (48 aa).

The interval 1–20 (MLLKNWPSRRIQRDKSKRAG) is disordered.

This is an uncharacterized protein from Bacillus subtilis (strain 168).